A 182-amino-acid chain; its full sequence is Ribosome maturation factor RimM (182 aa).

The region spanning 103-182 is the PRC barrel domain; that stretch reads EDDYYWKDLM…RVEVDWDPGF (80 aa).

Belongs to the RimM family. As to quaternary structure, binds ribosomal protein uS19.

The protein localises to the cytoplasm. An accessory protein needed during the final step in the assembly of 30S ribosomal subunit, possibly for assembly of the head region. Essential for efficient processing of 16S rRNA. May be needed both before and after RbfA during the maturation of 16S rRNA. It has affinity for free ribosomal 30S subunits but not for 70S ribosomes. This chain is Ribosome maturation factor RimM, found in Yersinia pestis (strain Pestoides F).